The following is a 346-amino-acid chain: MEFSAKQIAAFIQGEIIGDENATVHTFAKIEEGIPGAISFLSNPKYTPYIYETKASIVLVNKDFTPEQEVKATLIKVDNAYESLAKLLNLYEMSKPKRTGIDERAYVAETAKIGKDVYIAPFACIGDHAEIGDNTVIHPHATVGGGAKIGSNCILYANSTVYHDCRVGNNCILHAGCVIGADGFGFAPTPQGYEKIPQIGIVILEDNVEVGANTCIDRATMGATVIHSGVKLDNLVQIAHNDEIGSHTVMAAQVGIAGSTKVGEWCMFGGQVGIAGHLKIGNQVNLGAQSGVPGNIKSGSQLIGTPPMELKQFFKASIVQKSLPEMQIELRNLRKEIEELKQQLNK.

Catalysis depends on His240, which acts as the Proton acceptor.

It belongs to the transferase hexapeptide repeat family. LpxD subfamily. As to quaternary structure, homotrimer.

The catalysed reaction is a UDP-3-O-[(3R)-3-hydroxyacyl]-alpha-D-glucosamine + a (3R)-hydroxyacyl-[ACP] = a UDP-2-N,3-O-bis[(3R)-3-hydroxyacyl]-alpha-D-glucosamine + holo-[ACP] + H(+). The protein operates within bacterial outer membrane biogenesis; LPS lipid A biosynthesis. Catalyzes the N-acylation of UDP-3-O-acylglucosamine using 3-hydroxyacyl-ACP as the acyl donor. Is involved in the biosynthesis of lipid A, a phosphorylated glycolipid that anchors the lipopolysaccharide to the outer membrane of the cell. The chain is UDP-3-O-acylglucosamine N-acyltransferase from Bacteroides fragilis (strain YCH46).